The following is a 390-amino-acid chain: Phosphoglycerate kinase (390 aa).

Substrate-binding positions include 19–21 (DYN), Arg-34, 57–60 (HLGR), Arg-115, and Arg-148. Residues Lys-198, Gly-289, Glu-320, and 347–350 (GGDS) contribute to the ATP site.

This sequence belongs to the phosphoglycerate kinase family. Monomer.

It localises to the cytoplasm. It catalyses the reaction (2R)-3-phosphoglycerate + ATP = (2R)-3-phospho-glyceroyl phosphate + ADP. Its pathway is carbohydrate degradation; glycolysis; pyruvate from D-glyceraldehyde 3-phosphate: step 2/5. In Thermus thermophilus (strain ATCC 27634 / DSM 579 / HB8), this protein is Phosphoglycerate kinase (pgk).